A 175-amino-acid chain; its full sequence is Ribosome maturation factor RimM (175 aa).

The region spanning 98-172 is the PRC barrel domain; it reads DGEFHVRDLQ…WLLITPPKGL (75 aa).

It belongs to the RimM family. Binds ribosomal protein uS19.

It localises to the cytoplasm. Functionally, an accessory protein needed during the final step in the assembly of 30S ribosomal subunit, possibly for assembly of the head region. Essential for efficient processing of 16S rRNA. May be needed both before and after RbfA during the maturation of 16S rRNA. It has affinity for free ribosomal 30S subunits but not for 70S ribosomes. In Synechococcus sp. (strain RCC307), this protein is Ribosome maturation factor RimM.